The following is a 12345-amino-acid chain: Muscle-specific protein 300 kDa (12345 aa).

2 disordered regions span residues 1 to 68 (MADS…STVT) and 121 to 152 (WSDGSSPVKRPAEQSSDELRLTDDQDEYDAEN). The Cytoplasmic segment spans residues 1–12295 (MADSGGPGSK…GARFLGRVAR (12295 aa)). Residues 19 to 28 (AGGGGAGAAG) are compositionally biased toward gly residues. A compositionally biased stretch (basic and acidic residues) spans 45-60 (EQKSSREQVLEEEKSQ). One copy of the LRR 1 repeat lies at 249–273 (FKELENFLEGERTVREVPSADGVRT). 3 disordered regions span residues 295–325 (EGYVSPRDSPSWSRSSYSSERSSVTPPRSVD), 387–488 (TVQV…RKLI), and 504–526 (GKSNASDNDIDIDNDSDTEGRPA). Low complexity predominate over residues 299–321 (SPRDSPSWSRSSYSSERSSVTPP). 2 stretches are compositionally biased toward polar residues: residues 387-404 (TVQVGGGNRTSPQDSTPQ) and 414-434 (TTKTMLTSTPIGTKEQPQTGP). Positions 462–484 (TITSTTTKSTSSSTSATSSSSTS) are enriched in low complexity. Residues 511-520 (NDIDIDNDSD) show a composition bias toward acidic residues. 2 Calponin-homology (CH) domains span residues 630–737 (RVQK…LYFQ) and 777–882 (QGAR…HKYP). The stretch at 823–847 (LVNLAELKKTSNRQRLETAFDVAES) is one LRR 2 repeat. Residues 919–952 (SSFPRDFGEYLLARSEVDAHLAAYNRLKQLIESQ) form a TPR 1 repeat. 3 LRR repeats span residues 1089–1112 (CCLIAFLNLVENKMRGWTGKYGHE), 1389–1411 (HLFHQLQIQQESLEAGQKEIHQW), and 1616–1642 (LKDVEKELQLEQQALNRNEDVDSILQR). A TPR 2 repeat occupies 1603-1636 (LEFRLDENAFYQSLKDVEKELQLEQQALNRNEDV). One copy of the HAT 1 repeat lies at 1903–1935 (TGWNQAYTETSDKLQALKGTQAVWSEFVDQKND). LRR repeat units follow at residues 2087-2109 (KQLDLLAADASELAPKEGNIAEA) and 2558-2581 (QQQIQQMTVRKDKFHALEHNFGQA). The region spanning 2109-2233 (AKRLKGEITK…SRWTAVHENA (125 aa)) is the Calponin-homology (CH) 3 domain. One copy of the TPR 3 repeat lies at 2663–2696 (ADRIQKYNLISQALREYADSKDKFSKELKKAEDL). Positions 2699–2724 (AIPQQPRDETELHQASEKTRKTMEQL) are disordered. The span at 2704 to 2724 (PRDETELHQASEKTRKTMEQL) shows a compositional bias: basic and acidic residues. LRR repeat units lie at residues 2728–2751 (KLSLDELERRGNNVGKLFSAIGEP), 2935–2959 (CRALRGELDNSGNEIDNIKQKVDEL), and 3030–3053 (SSDKYNLDVKKSSLQEVSKSIDDC). Positions 2894 to 2962 (EQELRRRSKE…KQKVDELRNL (69 aa)) form a coiled coil. A Spectrin 1 repeat occupies 3110-3207 (LWSQYEQSNE…AVSKALTSYI (98 aa)). Residues 3346–3379 (KAKVPTTDELYPTLATKKAALQNYKTQLQEITLH) form a TPR 4 repeat. LRR repeat units lie at residues 3370-3393 (KTQLQEITLHKNALKQLHDKAVTL), 3437-3462 (LEKAQDWLNTIKSEAIDILNETTFEK), 3530-3556 (LVKLKQLCSKWDEFDTIIEELDNWMKN), and 3611-3634 (NLKLSRLNTRYQTLKNLCKESIAK). One copy of the Spectrin 2 repeat lies at 3539–3633 (KWDEFDTIIE…LKNLCKESIA (95 aa)). A TPR 5 repeat occupies 3629 to 3662 (KESIAKYVNYVKDHESFDKDFDSFKQNLQSSVDE). One copy of the HAT 2 repeat lies at 3706–3739 (KLYGHTSPEGREIIRQQLRALRTLWDNYTDDLNS). One copy of the LRR 15 repeat lies at 3748–3771 (LLQFNEFSIAQDQLTKWLKDVDKA). The stretch at 4177-4273 (SYQDILNQTV…YDQVGQDCAK (97 aa)) is one Spectrin 3 repeat. A TPR 6 repeat occupies 4360–4393 (EVMARDLANLHADFEKFGASLSDVKSGLENRLQQ). An HAT 3 repeat occupies 4371-4403 (ADFEKFGASLSDVKSGLENRLQQWNDYEINLDR). Residues 4611 to 4701 (FDEIADSLKS…GKLQKRAQNY (91 aa)) form a Spectrin 4 repeat. 2 LRR repeats span residues 4654 to 4676 (NDINNHQVELGNLQEIAANLPEK) and 4742 to 4763 (EQISLHTNLDRLKNLKASLADE). An HAT 4 repeat occupies 4799–4830 (EWESLLTTISSTIEAIEARLQHWSEYEQLRDQ). One copy of the Spectrin 5 repeat lies at 4820–4919 (HWSEYEQLRD…VKELNNRWQQ (100 aa)). An LRR 18 repeat occupies 4839–4863 (DNNLHAIDLKEDLPKKRAQLDALKA). Residues 4894 to 4926 (ASGPELVTKYQQIFHKVKELNNRWQQYVTSHED) form an HAT 5 repeat. LRR repeat units lie at residues 5266–5289 (QIDILVKNHKLNLCPNLPEKEKQV) and 5333–5357 (SSVYQVQVNLAKDVLKKVETNRDQH). The TPR 7 repeat unit spans residues 5645–5678 (SAEPEDCEIIEQEVALLQEEFDAYREALNKAKDY). LRR repeat units lie at residues 5761–5784 (SNAIMQLTTKYNALLTLAKEVMRR), 5820–5843 (PGTLNEVQIKLNTVKNLRQGFETG), and 5979–6002 (TKFDDLQTQVNKIIESLENQVNSH). A Spectrin 6 repeat occupies 5791 to 5895 (EHQQHHSLYE…DLNDVRQKLA (105 aa)). The stretch at 6088–6120 (SEWETLQTISRDARSSLESCLAAWQTFLQKFNK) is one HAT 6 repeat. Spectrin repeat units lie at residues 6321-6405 (RWND…DKLK) and 6424-6530 (AYHQ…RLLE). 2 coiled-coil regions span residues 6356–6397 (MKTL…VNRL) and 6454–6484 (REQTQEQIKQHEALLVEIQKYQTNLDDLNAK). Residues 6363–6387 (YKTLSNELKLKGNELEQLQSEARDL) form an LRR 24 repeat. A TPR 8 repeat occupies 6522-6555 (VQIKNRLLESLAKFQEYEDTLDSIMRNLETYEPI). LRR repeat units lie at residues 6531 to 6554 (SLAKFQEYEDTLDSIMRNLETYEP) and 6560 to 6587 (LDAPATSLELAQNQLRCAQEMQNKLNNE). Residues 6567–6597 (LELAQNQLRCAQEMQNKLNNEKSRLAAAVQA) are a coiled coil. Residues 6631 to 6657 (EDLLDQKPPPKTRSSTGGVSTDDDKDE) form a disordered region. One copy of the TPR 9 repeat lies at 6660–6695 (VEIQVELSDVNEALLDPIAHERVKNYRRIVRLNSAH). One copy of the LRR 27 repeat lies at 7004–7026 (SALRNLNTENRNLSGVLKAELDR). One copy of the TPR 10 repeat lies at 7161–7195 (EMETATEGELRTTSLPVLEEQLAHYKKLLSDAENK). LRR repeat units follow at residues 7219–7242 (LKLNDDIKNMKDRYGRIKNTIDDR), 7300–7318 (KELKDSKSKMGDMQMDDLP), 7319–7339 (ELQSILAQQDDMIKLIEDQLA), and 7340–7361 (HLRQLLLLREQFIALINEIIAF). A coiled-coil region spans residues 7419–7457 (KNSITEQLQSLKNQLQNLRKAVESQRQKHQLQLESHKKM). One copy of the LRR 32 repeat lies at 7524-7547 (SSLLEMLSEGRSLVASLPHELEER). The stretch at 7644 to 7676 (TKLTNTLANAKTQQSELEKEAERWREYQQSIDR) is one HAT 7 repeat. The TPR 11 repeat unit spans residues 7654 to 7687 (KTQQSELEKEAERWREYQQSIDRVKATIERTKFV). LRR repeat units lie at residues 7692 to 7714 (QNLAGLHFNIQKLSHAIGNVQSQ), 7752 to 7777 (QDLVRSLEQRRDNLQQLAEHWDGFEN), and 7816 to 7840 (LREESNQLKSSHKEIEALSKSILTF). The stretch at 7759 to 7792 (EQRRDNLQQLAEHWDGFENSLHAWEKALGRLEDK) is one TPR 12 repeat. A coiled-coil region spans residues 7799 to 7935 (TVRSRRHLED…NSQVQQAAEE (137 aa)). One copy of the TPR 13 repeat lies at 7878 to 7911 (SKDLEEIEQVFRRISQLQDKLNALHEQLQSVHVY). 4 LRR repeats span residues 8178–8201 (KISVEAVLLERNSLLQEACEEWDQ), 8238–8264 (EKTLADINVQKTKLRLSIEKLEVHFRN), 8298–8321 (EQTLAQIDVYQQQMQSLRQRIIQE), and 8354–8377 (DELLQSLSSVEDGIANMNQSSLDG). The TPR 14 repeat unit spans residues 8431 to 8464 (QQGITMIANAMHGQKKRQQEIDEYQQHLLELEQW). The stretch at 8534 to 8557 (EQLQSIITILREQVTVATKRIFTI) is one LRR 40 repeat. 6 disordered regions span residues 8583–8616 (IKPPTEAPASPEAHESIESNENTIDSSSMPEEEI), 8966–9023 (QKPT…LPAP), 9131–9158 (EFEPQSPHEESTKSDLVKPQETEPQVVA), 9361–9459 (GKES…PDSD), 9502–9735 (LVED…TSIS), and 9769–9797 (TMQLPKQEKKSKKDKKKKQKNVPEVEQQL). Positions 8601–8611 (SNENTIDSSSM) are enriched in polar residues. Residues 8982-9011 (TQVTTTTRTTTATTQEQEQPEQQTQPTTTE) are compositionally biased toward low complexity. Residues 9136–9151 (SPHEESTKSDLVKPQE) are compositionally biased toward basic and acidic residues. The segment covering 9394-9404 (KRRRKKKKRRD) has biased composition (basic residues). The span at 9410–9419 (ELEQEQETEP) shows a compositional bias: acidic residues. Over residues 9420-9439 (EPVAAVKEPEVSSDVPVSPE) the composition is skewed to low complexity. Residues 9440–9451 (DSPRDTVRHESI) show a composition bias toward basic and acidic residues. 3 stretches are compositionally biased toward polar residues: residues 9544–9563 (AVQTSLEVQPDNQENESQTL), 9587–9597 (ISTTEIQTDVS), and 9605–9625 (EISSQTTVTTTIEKELQTTPK). A compositionally biased stretch (low complexity) spans 9658 to 9680 (TSEQSTVTETTTTTETHVQTTTP). Basic and acidic residues predominate over residues 9681–9698 (EPREQTEVIKPETAHEET). The LRR 41 repeat unit spans residues 9699–9721 (STVELVQFADGEMQTTPPGDQQP). A compositionally biased stretch (polar residues) spans 9711–9735 (MQTTPPGDQQPASLDDSSLTATSIS). The segment covering 9777–9788 (KKSKKDKKKKQK) has biased composition (basic residues). LRR repeat units follow at residues 9995–10019 (SNVLHLATLSEQIKELPTEQRILEV), 10073–10096 (EEKLDNYNQLNDELSTIKQNVVQL), 10252–10276 (KEFTKITVLADKLVESPIVSSSLEQ), and 10353–10376 (RDELQWLQVAQQRVPDLSAVTSAD). Coiled-coil stretches lie at residues 10072-10099 (SEEKLDNYNQLNDELSTIKQNVVQLERQ) and 10172-10257 (LSAK…FTKI). One copy of the TPR 15 repeat lies at 10231 to 10264 (QAERERVLQLQSLAEEYEQTLKEFTKITVLADKL). Residues 10426–10458 (IVLLKLREEVALYLHRLLVFKEIWVQYEQQTDK) form an HAT 8 repeat. 3 LRR repeats span residues 10512-10535 (EKSLQVIPLADEMLQRQFHAQLED), 10570-10593 (ERELQEIYLTMTSMKGVIKNEEEL), and 10644-10667 (AEELEGASVLRDQLQAIQEGISNQ). A TPR 16 repeat occupies 10854 to 10888 (VVAWNDTSENLQQLRTRYQRAVELWDKYRNASAAV). An HAT 9 repeat occupies 10855–10887 (VAWNDTSENLQQLRTRYQRAVELWDKYRNASAA). LRR repeat units lie at residues 10907-10929 (DALQHAKVCQDNLTTQNDRILEL) and 11021-11043 (AHLQTLARTEEQLRQLKERHQNS). A coiled-coil region spans residues 11016 to 11046 (LAALRAHLQTLARTEEQLRQLKERHQNSEVA). Residues 11070–11104 (DTFQEYHRLSTRLARSQNSSEALRLWRQYLQHVQS) form an HAT 10 repeat. Residues 11072 to 11105 (FQEYHRLSTRLARSQNSSEALRLWRQYLQHVQSF) form a TPR 17 repeat. The LRR 51 repeat unit spans residues 11197-11222 (EAERNALQLRYIHLKRVPHLKHRLDA). 2 coiled-coil regions span residues 11220–11247 (LDAMIQQLDQGEQQSKALQEQQQELARH) and 11281–11308 (LQRVTQLSESYEQRVNQLQQEFGAAQKL). LRR repeat units lie at residues 11342 to 11365 (SALESLTVTQEELKECISPHDMKT), 11398 to 11422 (LSNYQIRYDRISQWLQRLEQRVEKD), 11670 to 11692 (EELESQSVNLRQLEQIYAKLAMS), 11697 to 11720 (PENIQKLTLPTKVMVSMWRQLTPR), and 11744 to 11766 (EATNSLNAIQKALEQLPSAENQQ). Residues 11655-11685 (KHKLEERQMELRAKLEELESQSVNLRQLEQI) adopt a coiled-coil conformation. Positions 11776–11806 (LQRLESLEKKLQDAQQHVQQADNLAQEAKTR) form a coiled coil. Residues 11804–11836 (KTRTKQQPQLKQLLELVSAYTTLWQTVQTRIVT) form an HAT 11 repeat. LRR repeat units lie at residues 11959–11981 (DTVAELTLRFDTLQSQWKARQQH) and 12198–12220 (SRLTDLRLRLQSLRRLSGIYIVK). The segment at 12253–12272 (SMQAAAPNTENANNTDGGDA) is disordered. Residues 12256–12267 (AAAPNTENANNT) show a composition bias toward low complexity. The KASH domain maps to 12287-12345 (ARFLGRVARASLPIQALMLLLLGVATLVPHGEDYTCMFSNTFARSLEPMLSYPHGPPPT). A helical; Anchor for type IV membrane protein membrane pass occupies residues 12296–12316 (ASLPIQALMLLLLGVATLVPH). An LRR 59 repeat occupies 12301–12323 (QALMLLLLGVATLVPHGEDYTCM). Over 12317 to 12345 (GEDYTCMFSNTFARSLEPMLSYPHGPPPT) the chain is Perinuclear space.

The protein belongs to the nesprin family. Core component of LINC complexes which are composed of inner nuclear membrane SUN domain-containing proteins coupled to outer nuclear membrane KASH domain-containing nesprins. Interacts with klar; this interaction allows the anchoring of the Msp300 nuclear ring structure to the nuclear envelope. Interacts with sls; this interaction mediates the recruitment of Msp300 to the Z-disks.

The protein resides in the nucleus membrane. The protein localises to the cytoplasm. It is found in the myofibril. Its subcellular location is the sarcomere. It localises to the z line. The protein resides in the cytoskeleton. The protein localises to the microtubule organizing center. It is found in the perinuclear region. Functionally, component of the LINC (LInker of Nucleoskeleton and Cytoskeleton) complex involved in the connection between the nuclear lamina and the cytoskeleton. Collaborates with Klar to promote even spacing of the myonuclei at the periphery of striated muscle fibers by mediating a tight association between a nuclear ring structure of Msp300 and the plus ends of a unique astral MT network. In addition, is essential for anchoring nuclei, mitochondria and endoplasmic reticulum (ER) structures to the Z-disks. In fat body cells, part of perinuclear non-centrosomal microtubule-organizing centers (ncMTOCs) which function to accommodate the organization of microtubule (MT) networks to control nuclear positioning and dynein motor-based retrograde endosomal trafficking. Functions as the primary organizer of the ncMTOC by recruiting Patronin, shot and msps to the organizing centre. Within the ncMTOC, Msp300 and shot anchors the ncMTOC at the nuclear surface and recruits the MT minus-end regulators Patronin and Nin for assembly, anchoring and/or stabilization of circumferential and radial MTs at the ncMTOCs. Patronin, and perhaps Nin, recruits msps to the ncMTOC for the gamma-tubulin-independent elongation of radial MTs. The sequence is that of Muscle-specific protein 300 kDa from Drosophila melanogaster (Fruit fly).